The primary structure comprises 463 residues: Cysteine--tRNA ligase (463 aa).

Residue Cys29 participates in Zn(2+) binding. The 'HIGH' region signature appears at 31 to 41 (MTIYDLCHIGH). Cys218, His243, and Glu247 together coordinate Zn(2+). A 'KMSKS' region motif is present at residues 275–279 (KMSKS). Lys278 provides a ligand contact to ATP.

It belongs to the class-I aminoacyl-tRNA synthetase family. As to quaternary structure, monomer. Zn(2+) serves as cofactor.

It is found in the cytoplasm. The enzyme catalyses tRNA(Cys) + L-cysteine + ATP = L-cysteinyl-tRNA(Cys) + AMP + diphosphate. This chain is Cysteine--tRNA ligase, found in Polaromonas naphthalenivorans (strain CJ2).